The sequence spans 415 residues: Calcium/calmodulin-dependent serine/threonine-protein kinase (415 aa).

Positions 12-308 constitute a Protein kinase domain; sequence YEISEILGRG…AQELLDHPWV (297 aa). Residues 18–26 and lysine 46 contribute to the ATP site; that span reads LGRGGFSVV. Aspartate 173 functions as the Proton acceptor in the catalytic mechanism. A calmodulin-binding region spans residues 318–328; it reads MDAEIVSRLQS.

This sequence belongs to the protein kinase superfamily. CAMK Ser/Thr protein kinase family. CaMK subfamily.

It carries out the reaction L-seryl-[protein] + ATP = O-phospho-L-seryl-[protein] + ADP + H(+). The catalysed reaction is L-threonyl-[protein] + ATP = O-phospho-L-threonyl-[protein] + ADP + H(+). Its function is as follows. May be involved in signal transduction processes. The chain is Calcium/calmodulin-dependent serine/threonine-protein kinase from Malus domestica (Apple).